The chain runs to 376 residues: T-box transcription factor 18 (376 aa).

Positions 38–63 (STSRPSSSSPPSLPAVSSELLSSSFP) are enriched in low complexity. Positions 38–76 (STSRPSSSSPPSLPAVSSELLSSSFPTNAPESSSRDLAP) are disordered. A DNA-binding region (T-box) is located at residues 171-364 (LANQEQWAKF…GNKYCRTDRK (194 aa)).

Its subcellular location is the nucleus. Transcriptional regulator involved in developmental processes. Directly binds to the promoter region of the sex-determining factor xol-1 to activate its transcription. Its activation of xol-1 transcription controls sex determination and X chromosome dosage compensation to promote male development. Has a role in the fox-1-sex-1-mediated determination of sexual fate. The protein is T-box transcription factor 18 of Caenorhabditis elegans.